We begin with the raw amino-acid sequence, 357 residues long: CRISPR system Cms protein Csm5 (357 aa).

This sequence belongs to the CRISPR-associated Csm5 family. In terms of assembly, part of the Csm effector complex that includes at least Cas10(1), Csm2(3), Csm3(5), Csm4(1), Csm5(1) and mature crRNA. The Csm complex is elongated and slightly twisted with a maximal length of 215 Angstroms and a diameter of 75-80 Angstroms. It has been modeled to have a central protein filamant of Csm3 subunits along which the dsRNA helix of paired crRNA and target RNA binds. The filament is capped at one end by Cas10 and Csm4 and at the other end by Csm5; ssDNA is thought to bind to the N-terminal HD domain of Cas10. Csm with a precursor crRNA does not include Csm5, while Cas6, the enzyme probably involved in pre-crRNA processing, is found associated with a subset of the Csm complex.

CRISPR (clustered regularly interspaced short palindromic repeat) is an adaptive immune system that provides protection against mobile genetic elements (viruses, transposable elements and conjugative plasmids). CRISPR clusters contain spacers, sequences complementary to antecedent mobile elements, and target invading nucleic acids. CRISPR clusters are transcribed and processed into CRISPR RNA (crRNA). The type III-A Csm effector complex binds crRNA and acts as a crRNA-guided RNase, DNase and cyclic oligoadenylate synthase; binding of target RNA cognate to the crRNA is required for all activities. In a heterologous host this Csm effector complex restricts ssRNA phage MS2, suggesting it may target RNA viruses in vivo. Functionally, csm functions as a non-specific ssDNase. Base-pairing between crRNA and target RNA to form a ternary Csm complex activates a ssDNase activity; target RNA cleavage suppresses the ssDNase, a temporal control that prevents uncontrolled DNA degradation. Viral RNA transcripts probably tether the Csm complex to the viral genome, recruiting Cas10 ssDNA activity which is able to degrade DNA in the transcription bubble, spatially controlling the DNase activity. In terms of biological role, this subunit might be involved in maturation of a crRNA intermediate to its mature form. The sequence is that of CRISPR system Cms protein Csm5 from Streptococcus thermophilus.